The chain runs to 161 residues: MENEPDTICILVDADACPVKAEIYRVAERHNLPVVIVANSFIAIPREAQRVERVVVSGNLDAADDWIAEHSRPGAVVVTADIPLASRALEKGASVIAPNGRIHTQSTIGNTLAARNLMDSLRSAGEVTGGPAPFAPKDRSAFLSALDLAIVRLKRAGFHAS.

It belongs to the UPF0178 family.

The polypeptide is UPF0178 protein BSUIS_A1819 (Brucella suis (strain ATCC 23445 / NCTC 10510)).